A 194-amino-acid polypeptide reads, in one-letter code: Casparian strip membrane protein 2 (194 aa).

The Cytoplasmic segment spans residues 1 to 32 (MSTTIDIPESSKVVKGKGVVAAPLRPGGWKKG). Residues 33-53 (VAIMDFILRLGAIAAALGAAA) traverse the membrane as a helical segment. At 54-82 (TMGTSDQTLPFFTQFFQFEASYDSFTTFQ) the chain is on the extracellular side. A helical transmembrane segment spans residues 83–103 (FFVITMALVGGYLVLSLPFSV). Residues 104–115 (VAIIRPHAVGPR) lie on the Cytoplasmic side of the membrane. Residues 116 to 136 (LFLIILDTVFLTLATASAASA) traverse the membrane as a helical segment. The Extracellular portion of the chain corresponds to 137–168 (AAVVYLAHNGDQDTNWLAICNQFGDFCAQTSS). A helical transmembrane segment spans residues 169–189 (AVVSSFVAVVVFVLLIVMSAL). The Cytoplasmic portion of the chain corresponds to 190-194 (AMGKP).

This sequence belongs to the Casparian strip membrane proteins (CASP) family. Homodimer and heterodimers.

The protein resides in the cell membrane. Regulates membrane-cell wall junctions and localized cell wall deposition. Required for establishment of the Casparian strip membrane domain (CSD) and the subsequent formation of Casparian strips, a cell wall modification of the root endodermis that determines an apoplastic barrier between the intraorganismal apoplasm and the extraorganismal apoplasm and prevents lateral diffusion. The sequence is that of Casparian strip membrane protein 2 from Vigna unguiculata (Cowpea).